A 146-amino-acid chain; its full sequence is Hemoglobin subunit beta (146 aa).

Valine 1 carries the N-acetylvaline modification. Residues 2–146 (HLTGEEKTAV…VANALAHKYH (145 aa)) enclose the Globin domain. Threonine 12 bears the Phosphothreonine mark. Position 44 is a phosphoserine (serine 44). Lysine 59 carries the post-translational modification N6-acetyllysine. Histidine 63 is a binding site for heme b. N6-acetyllysine is present on lysine 82. Histidine 92 serves as a coordination point for heme b. Residue cysteine 93 is modified to S-nitrosocysteine. Lysine 144 is modified (N6-acetyllysine).

The protein belongs to the globin family. In terms of assembly, heterotetramer of two alpha chains and two beta chains. As to expression, red blood cells.

Its function is as follows. Involved in oxygen transport from the lung to the various peripheral tissues. The polypeptide is Hemoglobin subunit beta (HBB) (Nasua nasua (Ring-tailed coati)).